A 62-amino-acid chain; its full sequence is Large ribosomal subunit protein bL28 (62 aa).

The tract at residues 1–26 (MARKCYVTGKSPKSGNNRSHALNKTK) is disordered. The segment covering 11-20 (SPKSGNNRSH) has biased composition (polar residues).

It belongs to the bacterial ribosomal protein bL28 family.

This chain is Large ribosomal subunit protein bL28, found in Exiguobacterium sp. (strain ATCC BAA-1283 / AT1b).